Here is a 338-residue protein sequence, read N- to C-terminus: Holliday junction branch migration complex subunit RuvB (338 aa).

Residues 1–181 (MERAITPEKR…FGVISRLEFY (181 aa)) are large ATPase domain (RuvB-L). Residues Leu-20, Arg-21, Gly-62, Lys-65, Thr-66, Thr-67, 128–130 (EDF), Arg-171, Tyr-181, and Arg-218 each bind ATP. Mg(2+) is bound at residue Thr-66. Residues 182–252 (THDELAFIVT…VVQETLRLLE (71 aa)) form a small ATPAse domain (RuvB-S) region. The tract at residues 255–338 (EMGFDQMDRM…TPERPQGSLF (84 aa)) is head domain (RuvB-H). DNA-binding residues include Arg-310 and Arg-315.

It belongs to the RuvB family. As to quaternary structure, homohexamer. Forms an RuvA(8)-RuvB(12)-Holliday junction (HJ) complex. HJ DNA is sandwiched between 2 RuvA tetramers; dsDNA enters through RuvA and exits via RuvB. An RuvB hexamer assembles on each DNA strand where it exits the tetramer. Each RuvB hexamer is contacted by two RuvA subunits (via domain III) on 2 adjacent RuvB subunits; this complex drives branch migration. In the full resolvosome a probable DNA-RuvA(4)-RuvB(12)-RuvC(2) complex forms which resolves the HJ.

Its subcellular location is the cytoplasm. The enzyme catalyses ATP + H2O = ADP + phosphate + H(+). The RuvA-RuvB-RuvC complex processes Holliday junction (HJ) DNA during genetic recombination and DNA repair, while the RuvA-RuvB complex plays an important role in the rescue of blocked DNA replication forks via replication fork reversal (RFR). RuvA specifically binds to HJ cruciform DNA, conferring on it an open structure. The RuvB hexamer acts as an ATP-dependent pump, pulling dsDNA into and through the RuvAB complex. RuvB forms 2 homohexamers on either side of HJ DNA bound by 1 or 2 RuvA tetramers; 4 subunits per hexamer contact DNA at a time. Coordinated motions by a converter formed by DNA-disengaged RuvB subunits stimulates ATP hydrolysis and nucleotide exchange. Immobilization of the converter enables RuvB to convert the ATP-contained energy into a lever motion, pulling 2 nucleotides of DNA out of the RuvA tetramer per ATP hydrolyzed, thus driving DNA branch migration. The RuvB motors rotate together with the DNA substrate, which together with the progressing nucleotide cycle form the mechanistic basis for DNA recombination by continuous HJ branch migration. Branch migration allows RuvC to scan DNA until it finds its consensus sequence, where it cleaves and resolves cruciform DNA. The chain is Holliday junction branch migration complex subunit RuvB from Trichlorobacter lovleyi (strain ATCC BAA-1151 / DSM 17278 / SZ) (Geobacter lovleyi).